A 254-amino-acid polypeptide reads, in one-letter code: Alcohol dehydrogenase (254 aa).

10–33 is an NAD(+) binding site; the sequence is FVAGLGGIGLDTSREIVKSGPKNL. Substrate is bound at residue Ser138. The active-site Proton acceptor is the Tyr151.

This sequence belongs to the short-chain dehydrogenases/reductases (SDR) family. As to quaternary structure, homodimer.

It catalyses the reaction a primary alcohol + NAD(+) = an aldehyde + NADH + H(+). The catalysed reaction is a secondary alcohol + NAD(+) = a ketone + NADH + H(+). The chain is Alcohol dehydrogenase (Adh) from Drosophila heteroneura (Fruit fly).